We begin with the raw amino-acid sequence, 170 residues long: Acetyl-CoA decarbonylase/synthase complex subunit epsilon 1 (170 aa).

This sequence belongs to the CdhB family. In terms of assembly, heterotetramer of two alpha and two epsilon subunits. The ACDS complex is made up of alpha, epsilon, beta, gamma and delta subunits with a probable stoichiometry of (alpha(2)epsilon(2))(4)-beta(8)-(gamma(1)delta(1))(8).

The protein operates within one-carbon metabolism; methanogenesis from acetate. Part of a complex that catalyzes the reversible cleavage of acetyl-CoA, allowing growth on acetate as sole source of carbon and energy. The alpha-epsilon subcomponent functions as a carbon monoxide dehydrogenase. The precise role of the epsilon subunit is unclear; it may have a stabilizing role within the alpha(2)epsilon(2) component and/or be involved in electron transfer to FAD during a potential FAD-mediated CO oxidation. The polypeptide is Acetyl-CoA decarbonylase/synthase complex subunit epsilon 1 (cdhB1) (Methanosarcina acetivorans (strain ATCC 35395 / DSM 2834 / JCM 12185 / C2A)).